We begin with the raw amino-acid sequence, 136 residues long: MLSNPKRTRFRKQHRGRMKGVSYRGNHICFGRYALQALEPAWITSRQIEAGRRAMTRYARRGGRIWVRIFPDKPVTVRPTETRMGSGKGSPEYWVSVVKPGRILYEMGGVSETVARSAISIAASKMPIRTQFVIAG.

The protein belongs to the universal ribosomal protein uL16 family. Part of the 50S ribosomal subunit.

The protein localises to the plastid. Its subcellular location is the chloroplast. This chain is Large ribosomal subunit protein uL16c, found in Illicium oligandrum (Star anise).